Consider the following 118-residue polypeptide: Large ribosomal subunit protein uL22 (118 aa).

This sequence belongs to the universal ribosomal protein uL22 family. Part of the 50S ribosomal subunit.

Its function is as follows. This protein binds specifically to 23S rRNA; its binding is stimulated by other ribosomal proteins, e.g. L4, L17, and L20. It is important during the early stages of 50S assembly. It makes multiple contacts with different domains of the 23S rRNA in the assembled 50S subunit and ribosome. Functionally, the globular domain of the protein is located near the polypeptide exit tunnel on the outside of the subunit, while an extended beta-hairpin is found that lines the wall of the exit tunnel in the center of the 70S ribosome. The chain is Large ribosomal subunit protein uL22 from Prosthecochloris aestuarii (strain DSM 271 / SK 413).